A 141-amino-acid chain; its full sequence is Small ribosomal subunit protein uS19 (141 aa).

This sequence belongs to the universal ribosomal protein uS19 family.

Functionally, protein S19 forms a complex with S13 that binds strongly to the 16S ribosomal RNA. The protein is Small ribosomal subunit protein uS19 of Halorubrum lacusprofundi (strain ATCC 49239 / DSM 5036 / JCM 8891 / ACAM 34).